Reading from the N-terminus, the 199-residue chain is NAD(P)H dehydrogenase (quinone) (199 aa).

The region spanning 4-190 is the Flavodoxin-like domain; that stretch reads VLVLYYSAYG…DGARYQGRKI (187 aa). FMN-binding positions include 10-15 and 78-80; these read SAYGHI and TRF. Residue Tyr-12 coordinates NAD(+). Trp-98 contributes to the substrate binding site. Residues 113 to 119 and His-134 contribute to the FMN site; that span reads STATQHG.

It belongs to the WrbA family. FMN is required as a cofactor.

The catalysed reaction is a quinone + NADH + H(+) = a quinol + NAD(+). It carries out the reaction a quinone + NADPH + H(+) = a quinol + NADP(+). The protein is NAD(P)H dehydrogenase (quinone) of Xanthobacter autotrophicus (strain ATCC BAA-1158 / Py2).